Here is a 770-residue protein sequence, read N- to C-terminus: Amyloid-beta precursor protein (770 aa).

The first 17 residues, Met1–Ala17, serve as a signal peptide directing secretion. The Extracellular portion of the chain corresponds to Leu18 to Ala701. The segment at Leu28–Val123 is GFLD subdomain. Positions Leu28 to Leu189 constitute an E1 domain. 6 cysteine pairs are disulfide-bonded: Cys38-Cys62, Cys73-Cys117, Cys98-Cys105, Cys133-Cys187, Cys144-Cys174, and Cys158-Cys186. Asn96–His110 contacts heparin. The segment at Asp131 to Leu189 is cuBD subdomain. Residues His147, His151, and Tyr168 each contribute to the Cu(2+) site. The interval Gly181–Pro188 is zinc-binding. Zn(2+)-binding residues include Glu183, Cys186, and Cys187. Over residues Asp194–Asp207 the composition is skewed to acidic residues. The tract at residues Asp194 to Glu284 is disordered. Ser198 is subject to Phosphoserine; by CK2. Ser206 carries the phosphoserine; by CK1 modification. 2 positions are modified to sulfotyrosine: Tyr217 and Tyr262. A compositionally biased stretch (acidic residues) spans Val228–Glu264. The span at Arg268–Glu281 shows a compositional bias: low complexity. Intrachain disulfides connect Cys291/Cys341, Cys300/Cys324, and Cys316/Cys337. The BPTI/Kunitz inhibitor domain maps to Cys291–Cys341. Tyr336 is modified (sulfotyrosine). The OX-2 signature appears at Val344 to Pro365. The E2 domain occupies Ala374 to Leu565. Residues Phe391 to Leu423 are heparin-binding. Residue Ser441 is modified to Phosphoserine. The interval Phe491–Lys522 is heparin-binding. Position 497 is a phosphotyrosine (Tyr497). The tract at residues Ala523–Arg540 is collagen-binding. 2 N-linked (GlcNAc...) asparagine glycosylation sites follow: Asn542 and Asn571. Cu(2+) is bound by residues His677, Tyr681, His684, and His685. Residues His677, Tyr681, His684, and His685 each coordinate Zn(2+). The interaction with PSEN1 stretch occupies residues Val695–Met722. The helical transmembrane segment at Ile702–Met722 threads the bilayer. Residues Leu723–Asn770 are Cytoplasmic-facing. Residues Lys724–Gly734 carry the Basolateral sorting signal motif. A Phosphothreonine modification is found at Thr729. Phosphoserine; by APP-kinase I is present on Ser730. Positions His732 to Lys751 are interaction with G(o)-alpha. Thr743 bears the Phosphothreonine; by CDK5 and MAPK10 mark. Residues Gly756–Asn770 form a required for the interaction with KIF5B and for anterograde transport in axons region. Position 757 is a phosphotyrosine; by ABL1 (Tyr757). The YENPXY motif; contains endocytosis signal signature appears at Tyr757–Tyr762. Lys763 is covalently cross-linked (Glycyl lysine isopeptide (Lys-Gly) (interchain with G-Cter in ubiquitin)).

The protein belongs to the APP family. As to quaternary structure, binds, via its C-terminus, to the PID domain of several cytoplasmic proteins, including APBB family members, the APBA family, MAPK8IP1, SHC1 and NUMB and DAB1. Binding to DAB1 inhibits its serine phosphorylation. Interacts (via NPXY motif) with DAB2 (via PID domain); the interaction is impaired by tyrosine phosphorylation of the NPXY motif. Also interacts with GPCR-like protein BPP, APPBP1, IB1, KNS2 (via its TPR domains), APPBP2 (via BaSS) and DDB1. In vitro, it binds MAPT via the MT-binding domains. Associates with microtubules in the presence of ATP and in a kinesin-dependent manner. Interacts, through a C-terminal domain, with GNAO1. Amyloid-beta protein 42 binds CHRNA7 in hippocampal neurons. Amyloid-beta associates with HADH2. Interacts with CPEB1, ANKS1B and AGER. Interacts with ITM2B. Interacts with ITM2C. Interacts with IDE. Can form homodimers; dimerization is enhanced in the presence of Cu(2+) ions. Can form homodimers; this is promoted by heparin binding. Amyloid-beta protein 40 interacts with S100A9. CTF-alpha product of APP interacts with GSAP. Interacts with SORL1 (via N-terminal ectodomain); this interaction retains APP in the trans-Golgi network and reduces processing into soluble APP-alpha and amyloid-beta peptides. The C99 fragment also interacts with SORL1. Interacts with PLD3. Interacts with VDAC1. Interacts with NSG1; could regulate APP processing. Amyloid-beta protein 42 interacts with FPR2. Interacts (via transmembrane region) with PSEN1; the interaction is direct. Interacts with LRRK2. Interacts (via cytoplasmic domain) with KIF5B. Interacts (via C-terminus) with APBB2/FE65L1 (via C-terminus). Interacts (via intracellular domain) with APBB3. In terms of processing, proteolytically processed under normal cellular conditions. Cleavage either by alpha-secretase, beta-secretase or theta-secretase leads to generation and extracellular release of soluble APP peptides, S-APP-alpha and S-APP-beta, and the retention of corresponding membrane-anchored C-terminal fragments, C80, C83 and C99. Subsequent processing of C80 and C83 by gamma-secretase yields P3 peptides. This is the major secretory pathway and is non-amyloidogenic. Alternatively, presenilin/nicastrin-mediated gamma-secretase processing of C99 releases the amyloid-beta proteins, amyloid-beta protein 40 and amyloid-beta protein 42, major components of amyloid plaques, and the cytotoxic C-terminal fragments, gamma-CTF(50), gamma-CTF(57) and gamma-CTF(59). PSEN1 cleavage is more efficient with C83 than with C99 as substrate (in vitro). Amyloid-beta protein 40 and Amyloid-beta protein 42 are cleaved by ACE. Many other minor amyloid-beta peptides, amyloid-beta 1-X peptides, are found in cerebral spinal fluid (CSF) including the amyloid-beta X-15 peptides, produced from the cleavage by alpha-secretase. Post-translationally, proteolytically cleaved by caspases during neuronal apoptosis. Cleavage at Asp-739 by either caspase-3, -8 or -9 results in the production of the neurotoxic C31 peptide and the increased production of amyloid-beta peptides. N- and O-glycosylated. In terms of processing, phosphorylation in the C-terminal on tyrosine, threonine and serine residues is neuron-specific. Phosphorylation can affect APP processing, neuronal differentiation and interaction with other proteins. Phosphorylated on Thr-743 in neuronal cells by Cdc5 kinase and Mapk10, in dividing cells by Cdc2 kinase in a cell-cycle dependent manner with maximal levels at the G2/M phase and, in vitro, by GSK-3-beta. The Thr-743 phosphorylated form causes a conformational change which reduces binding of Fe65 family members. In dopaminergic (DA) neurons, phosphorylation on Thr-743 by LRKK2 promotes the production and the nuclear translocation of the APP intracellular domain (AICD) which induces DA neuron apoptosis. Phosphorylation on Tyr-757 is required for SHC binding. Phosphorylated in the extracellular domain by casein kinases on both soluble and membrane-bound APP. This phosphorylation is inhibited by heparin. Post-translationally, trophic-factor deprivation triggers the cleavage of surface APP by beta-secretase to release sAPP-beta which is further cleaved to release an N-terminal fragment of APP (N-APP). Amyloid-beta peptides are degraded by IDE. In terms of processing, sulfated on tyrosine residues.

The protein localises to the cell membrane. It is found in the membrane. It localises to the perikaryon. The protein resides in the cell projection. Its subcellular location is the growth cone. The protein localises to the clathrin-coated pit. It is found in the early endosome. It localises to the cytoplasmic vesicle. The protein resides in the endoplasmic reticulum. Its subcellular location is the golgi apparatus. The protein localises to the secreted. It is found in the cell surface. It localises to the nucleus. The protein resides in the cytoplasm. Functions as a cell surface receptor and performs physiological functions on the surface of neurons relevant to neurite growth, neuronal adhesion and axonogenesis. Interaction between APP molecules on neighboring cells promotes synaptogenesis. Involved in cell mobility and transcription regulation through protein-protein interactions. Can promote transcription activation through binding to APBB1-KAT5 and inhibit Notch signaling through interaction with Numb. Couples to apoptosis-inducing pathways such as those mediated by G(o) and JIP. Inhibits G(o)-alpha ATPase activity. Acts as a kinesin I membrane receptor, mediating the axonal transport of beta-secretase and presenilin 1. By acting as a kinesin I membrane receptor, plays a role in axonal anterograde transport of cargo towards synapses in axons. May be involved in copper homeostasis/oxidative stress through copper ion reduction. In vitro, copper-metallated APP induces neuronal death directly or is potentiated through Cu(2+)-mediated low-density lipoprotein oxidation. Can regulate neurite outgrowth through binding to components of the extracellular matrix such as heparin and collagen I and IV. Induces a AGER-dependent pathway that involves activation of p38 MAPK, resulting in internalization of amyloid-beta peptide and mitochondrial dysfunction in cultured cortical neurons. Provides Cu(2+) ions for GPC1 which are required for release of nitric oxide (NO) and subsequent degradation of the heparan sulfate chains on GPC1. Its function is as follows. Amyloid-beta peptides are lipophilic metal chelators with metal-reducing activity. Binds transient metals such as copper, zinc and iron. Functionally, the gamma-CTF peptides as well as the caspase-cleaved peptides, including C31, are potent enhancers of neuronal apoptosis. This chain is Amyloid-beta precursor protein, found in Pan troglodytes (Chimpanzee).